Consider the following 145-residue polypeptide: Large-conductance mechanosensitive channel (145 aa).

The next 2 helical transmembrane spans lie at 14-34 (VIDLAIGIIIGGAFGKIVDSL) and 81-101 (GIFISTIVDFLIMAFVVFLMV).

This sequence belongs to the MscL family. As to quaternary structure, homopentamer.

Its subcellular location is the cell inner membrane. Functionally, channel that opens in response to stretch forces in the membrane lipid bilayer. May participate in the regulation of osmotic pressure changes within the cell. The chain is Large-conductance mechanosensitive channel from Pelobacter propionicus (strain DSM 2379 / NBRC 103807 / OttBd1).